A 249-amino-acid chain; its full sequence is Imidazole glycerol phosphate synthase subunit HisF (249 aa).

Residues Asp-11 and Asp-130 contribute to the active site.

This sequence belongs to the HisA/HisF family. Heterodimer of HisH and HisF.

The protein localises to the cytoplasm. It carries out the reaction 5-[(5-phospho-1-deoxy-D-ribulos-1-ylimino)methylamino]-1-(5-phospho-beta-D-ribosyl)imidazole-4-carboxamide + L-glutamine = D-erythro-1-(imidazol-4-yl)glycerol 3-phosphate + 5-amino-1-(5-phospho-beta-D-ribosyl)imidazole-4-carboxamide + L-glutamate + H(+). It functions in the pathway amino-acid biosynthesis; L-histidine biosynthesis; L-histidine from 5-phospho-alpha-D-ribose 1-diphosphate: step 5/9. IGPS catalyzes the conversion of PRFAR and glutamine to IGP, AICAR and glutamate. The HisF subunit catalyzes the cyclization activity that produces IGP and AICAR from PRFAR using the ammonia provided by the HisH subunit. This Sulfolobus acidocaldarius (strain ATCC 33909 / DSM 639 / JCM 8929 / NBRC 15157 / NCIMB 11770) protein is Imidazole glycerol phosphate synthase subunit HisF.